The chain runs to 177 residues: Large ribosomal subunit protein uL6 (177 aa).

Belongs to the universal ribosomal protein uL6 family. As to quaternary structure, part of the 50S ribosomal subunit.

This protein binds to the 23S rRNA, and is important in its secondary structure. It is located near the subunit interface in the base of the L7/L12 stalk, and near the tRNA binding site of the peptidyltransferase center. This is Large ribosomal subunit protein uL6 from Cupriavidus taiwanensis (strain DSM 17343 / BCRC 17206 / CCUG 44338 / CIP 107171 / LMG 19424 / R1) (Ralstonia taiwanensis (strain LMG 19424)).